A 489-amino-acid polypeptide reads, in one-letter code: L-asparagine permease 1 (489 aa).

12 helical membrane passes run glutamine 25–glycine 45, lysine 49–leucine 69, alanine 100–isoleucine 120, isoleucine 137–phenylalanine 157, phenylalanine 162–phenylalanine 182, tryptophan 210–valine 230, isoleucine 255–tyrosine 275, isoleucine 289–serine 309, tyrosine 344–lysine 364, phenylalanine 369–leucine 389, serine 413–serine 433, and threonine 439–valine 459.

The protein belongs to the amino acid-polyamine-organocation (APC) superfamily. Amino acid transporter (AAT) (TC 2.A.3.1) family.

It localises to the cell membrane. The sequence is that of L-asparagine permease 1 (ansP1) from Mycobacterium tuberculosis (strain CDC 1551 / Oshkosh).